Here is a 209-residue protein sequence, read N- to C-terminus: Thymidylate kinase (209 aa).

10–17 (GLDGAGKS) contacts ATP.

It belongs to the thymidylate kinase family.

It carries out the reaction dTMP + ATP = dTDP + ADP. Its function is as follows. Phosphorylation of dTMP to form dTDP in both de novo and salvage pathways of dTTP synthesis. The protein is Thymidylate kinase of Francisella tularensis subsp. holarctica (strain FTNF002-00 / FTA).